The primary structure comprises 706 residues: Acyl-coenzyme A oxidase (706 aa).

The disordered stretch occupies residues 682–706 (MLNRPSKEERERFEKSTETAKILSK). The segment covering 686–699 (PSKEERERFEKSTE) has biased composition (basic and acidic residues).

Belongs to the acyl-CoA oxidase family. It depends on FAD as a cofactor.

The protein localises to the peroxisome. The catalysed reaction is a 2,3-saturated acyl-CoA + O2 = a (2E)-enoyl-CoA + H2O2. Its pathway is lipid metabolism; peroxisomal fatty acid beta-oxidation. In Debaryomyces hansenii (strain ATCC 36239 / CBS 767 / BCRC 21394 / JCM 1990 / NBRC 0083 / IGC 2968) (Yeast), this protein is Acyl-coenzyme A oxidase (POX1).